We begin with the raw amino-acid sequence, 958 residues long: DNA repair and recombination protein RDH54 (958 aa).

Residues 189 to 217 (EALSQNMGNPSPPTTSTTETVPSTKNDGG) are disordered. The segment covering 202–212 (TTSTTETVPST) has biased composition (low complexity). A Helicase ATP-binding domain is found at 333-521 (LENDSDISGC…FTIIDFINPG (189 aa)). ATP is bound at residue 380 to 387 (IPLTGLCK). Positions 506–509 (NDLN) match the DEGH box motif. A Glycyl lysine isopeptide (Lys-Gly) (interchain with G-Cter in ubiquitin) cross-link involves residue lysine 649. The 160-residue stretch at 665–824 (KLKVLMTLLE…DSEMRNKESS (160 aa)) folds into the Helicase C-terminal domain.

The protein belongs to the SNF2/RAD54 helicase family. In terms of assembly, interacts with RAD51 and DMC1.

Its subcellular location is the nucleus. It carries out the reaction ATP + H2O = ADP + phosphate + H(+). In terms of biological role, involved in the recombinational repair of double-strand breaks (DSB) in DNA during mitosis and meiosis. Has DNA dependent ATPase activity. Promotes D-loop (displacement loop) formation with RAD51 recombinase. Modifies the topology of double-stranded DNA during the D-loop reaction to facilitate the invasion of the homologous duplex molecule by the initiating single-stranded DNA substrate. Required for adaptation from G2/M checkpoint arrest induced by a double strand break, by participating in monitoring the extent of single-stranded DNA produced by resection of DNA ends. This role is distinct from its roles in recombination. Promotes colocalization of RAD51 and DMC1 during meiotic recombination. Involved in crossover interference. The polypeptide is DNA repair and recombination protein RDH54 (RDH54) (Saccharomyces cerevisiae (strain ATCC 204508 / S288c) (Baker's yeast)).